We begin with the raw amino-acid sequence, 252 residues long: Deoxyuridine 5'-triphosphate nucleotidohydrolase, mitochondrial (252 aa).

The transit peptide at 1-69 (MTPLCPRPAL…AGRLSQGCRG (69 aa)) directs the protein to the mitochondrion. 3 positions are modified to phosphoserine: cysteine 11, serine 88, and serine 99. A disordered region spans residues 78-104 (WKGELPKAGGSPAPGPETPAISPSKRA). Residues 173 to 175 (RSG), 187 to 193 (GVIDEDY), glycine 198, arginine 241, and 246 to 247 (FG) contribute to the dUTP site.

It belongs to the dUTPase family. As to quaternary structure, homotrimer. Requires Mg(2+) as cofactor. Nuclear isoform 2 is phosphorylated in vivo on Ser-11, a reaction that can be catalyzed in vitro by CDC2. Phosphorylation in mature T-cells occurs in a cell cycle-dependent manner. Isoform 3 is not phosphorylated. In terms of tissue distribution, found in a variety of tissues. Isoform 3 expression is constitutive, while isoform 2 expression correlates with the onset of DNA replication (at protein level). Isoform 2 degradation coincides with the cessation of nuclear DNA replication (at protein level).

Its subcellular location is the nucleus. The protein resides in the mitochondrion. The enzyme catalyses dUTP + H2O = dUMP + diphosphate + H(+). It functions in the pathway pyrimidine metabolism; dUMP biosynthesis; dUMP from dCTP (dUTP route): step 2/2. Its activity is regulated as follows. Phosphorylation is necessary for activity. Functionally, catalyzes the cleavage of 2'-deoxyuridine 5'-triphosphate (dUTP) into 2'-deoxyuridine 5'-monophosphate (dUMP) and inorganic pyrophosphate and through its action efficiently prevents uracil misincorporation into DNA and at the same time provides dUMP, the substrate for de novo thymidylate biosynthesis. Inhibits peroxisome proliferator-activated receptor (PPAR) activity by binding of its N-terminal to PPAR, preventing the latter's dimerization with retinoid X receptor. Essential for embryonic development. The sequence is that of Deoxyuridine 5'-triphosphate nucleotidohydrolase, mitochondrial (DUT) from Homo sapiens (Human).